A 1240-amino-acid chain; its full sequence is Selection and upkeep of intraepithelial T-cells protein 6 (1240 aa).

The N-terminal stretch at 1 to 24 (MGTIGVPLTAHCVVLFLLQMVALS) is a signal peptide. The Extracellular segment spans residues 25–1086 (TEQFTVNGLE…CNKRNPFWKK (1062 aa)). The Ig-like V-type domain occupies 26 to 141 (EQFTVNGLES…EEHIIEVKVT (116 aa)). Cysteines 49 and 123 form a disulfide. Residues 142–231 (ATSSDIQILM…FVTHQEESIS (90 aa)) enclose the Ig-like C1-type domain. 3 N-linked (GlcNAc...) asparagine glycosylation sites follow: Asn-155, Asn-200, and Asn-314. Cysteines 163 and 217 form a disulfide. The chain crosses the membrane as a helical span at residues 1087–1107 (HALDLGISVFAIIVVTLIRHL). At 1108–1125 (NQREADQHFELDTLWSKD) the chain is on the cytoplasmic side. A helical transmembrane segment spans residues 1126 to 1146 (TSVILCVLIMFNNRLKALIYF). Residues 1147–1167 (RLYGYSPPGKTYKYIVNYILR) lie on the Extracellular side of the membrane. Residues 1168 to 1188 (FSQPLFFIVYSAIILVMHLQI) form a helical membrane-spanning segment. Residues 1189–1205 (QNTDSLFSLYNSWMVEM) lie on the Cytoplasmic side of the membrane. Residues 1206–1226 (IMVLGLLLAIFNVKNIATALL) form a helical membrane-spanning segment. The Extracellular portion of the chain corresponds to 1227-1240 (HLGRTTLRLFRIKD).

Belongs to the SKINT family. As to expression, expressed in skin.

The protein resides in the membrane. Its function is as follows. May act by engaging a cell surface molecule on immature T-cells in the embryonic thymus. This is Selection and upkeep of intraepithelial T-cells protein 6 (Skint6) from Mus musculus (Mouse).